Reading from the N-terminus, the 709-residue chain is Twinkle homolog protein, chloroplastic/mitochondrial (709 aa).

A chloroplast and mitochondrion-targeting transit peptide spans 1–16; that stretch reads MRFLLRLPQIHFRKLS. The Toprim domain maps to 280 to 385; sequence SEVIIVEGEI…KKSEDEHFKD (106 aa). E286, D348, and D350 together coordinate Mg(2+). One can recognise an SF4 helicase domain in the interval 430–698; it reads THGHEYGVST…GSYSDSPVTP (269 aa). Residue 460-467 participates in ATP binding; that stretch reads GIPNSGKS.

Mg(2+) serves as cofactor. Expressed in young leaves and shoot apex tissues. Detected in developing tissues such as cotyledons, sepals, pistils and inflorescences. Nearly undetectable in mature leaves.

It localises to the plastid. The protein resides in the chloroplast. The protein localises to the mitochondrion. The enzyme catalyses ATP + H2O = ADP + phosphate + H(+). Its function is as follows. Has both DNA primase and DNA helicase activities and may be involved in organelle DNA replication. Capable of producing RNA primers of 9 to 18 bases from a single-stranded DNA template. This Arabidopsis thaliana (Mouse-ear cress) protein is Twinkle homolog protein, chloroplastic/mitochondrial.